Consider the following 308-residue polypeptide: MSTTLLQSDLPGLPLRHRGKVRDVFDIPRDRLPADAPPGDYLLMVATDRLSAFDVVLPDPIPGKGEMLCQVSNFWFHKTEHLMPNHLVDIRVEQVLPEGVDPALYAKRAVVTRKLKPVPVEAIARGYLIGSGWKDYQRTGKISGIELPDGLRQAEKLPEPIFTPSTKAAVGDHDENIDFDAMVKTVGAELAERVRDATLRIYRFAADFAAECGILLADTKFEFGTDADGRLYVMDEMLTPDSSRYWPADQYELGTSPPSYDKQFVRDYLETLDWGKTAPGPSLPADVIDRTRAKYAEALQRLAGISVD.

The protein belongs to the SAICAR synthetase family.

The catalysed reaction is 5-amino-1-(5-phospho-D-ribosyl)imidazole-4-carboxylate + L-aspartate + ATP = (2S)-2-[5-amino-1-(5-phospho-beta-D-ribosyl)imidazole-4-carboxamido]succinate + ADP + phosphate + 2 H(+). The protein operates within purine metabolism; IMP biosynthesis via de novo pathway; 5-amino-1-(5-phospho-D-ribosyl)imidazole-4-carboxamide from 5-amino-1-(5-phospho-D-ribosyl)imidazole-4-carboxylate: step 1/2. The protein is Phosphoribosylaminoimidazole-succinocarboxamide synthase of Xanthomonas oryzae pv. oryzae (strain PXO99A).